A 148-amino-acid chain; its full sequence is Large ribosomal subunit protein bL9 (148 aa).

This sequence belongs to the bacterial ribosomal protein bL9 family.

Its function is as follows. Binds to the 23S rRNA. The polypeptide is Large ribosomal subunit protein bL9 (Pseudomonas putida (strain GB-1)).